We begin with the raw amino-acid sequence, 130 residues long: Small ribosomal subunit protein uS9 (130 aa).

Belongs to the universal ribosomal protein uS9 family.

This Streptococcus uberis (strain ATCC BAA-854 / 0140J) protein is Small ribosomal subunit protein uS9.